Consider the following 3931-residue polypeptide: Replicase polyprotein 1ab (3931 aa).

The C4-type; atypical zinc-finger motif lies at 8 to 28 (CTCTPNARVFVAEGQVYCTRC). Residues 69 to 182 (ECSPAGACWL…FCPFECAMAD (114 aa)) form a PCP1-alpha region. Residues cysteine 76 and histidine 146 each act as for nsp1-alpha papain-like cysteine proteinase activity in the active site. The important for host EIF2AK2 inhibition stretch occupies residues 199–200 (VS). Active-site for nsp1-beta papain-like cysteine proteinase activity residues include cysteine 270 and histidine 339. The OTU-like stretch occupies residues 426–513 (LKRYSPPAEG…GEHWTVSVIP (88 aa)). A Peptidase C33 domain is found at 428 to 536 (RYSPPAEGNC…GCCEHKGGLV (109 aa)). Active-site for nsp2 cysteine proteinase activity residues include cysteine 437 and histidine 506. 2 disordered regions span residues 809 to 868 (RWTP…VGGP) and 1118 to 1164 (TDEL…TGGV). The segment covering 810–819 (WTPPPPPPRV) has biased composition (pro residues). Basic and acidic residues predominate over residues 1139-1151 (PAKDPRMSPRESD). The next 3 membrane-spanning stretches (helical) occupy residues 1221-1241 (SGYS…LFLC), 1266-1286 (GVFG…SDPV), and 1339-1359 (WHFL…AYVL). Residues 1236-1359 (FCLFLCYSYP…DCILAGAYVL (124 aa)) are HD1. The tract at residues 1414–1438 (TGWRGCWTGRSPIEQPSEKPIAFAQ) is WCCH. Transmembrane regions (helical) follow at residues 1554 to 1574 (IAAL…VYVT), 1607 to 1627 (LCIS…GFGL), 1629 to 1649 (EIAL…RLSC), 1659 to 1679 (AIAS…PCWL), and 1695 to 1715 (FLIS…VSLW). Positions 1554–1715 (IAALHVACSM…LAVVLLVSLW (162 aa)) are HD2. Residues histidine 1818, aspartate 1843, and serine 1897 each act as charge relay system; for serine protease nsp4 activity in the active site. A run of 4 helical transmembrane segments spans residues 2006 to 2026 (WTPL…AVLV), 2030 to 2050 (FSFG…VLMI), 2064 to 2084 (LGFY…VTQG), and 2107 to 2127 (SPVP…LYLF). The segment at 2006 to 2127 (WTPLVAVGFF…HLLAIILYLF (122 aa)) is HD3.

It belongs to the arteriviridae polyprotein family. Nsp1-alpha papain-like: Interacts with host RNF31. As to quaternary structure, interacts with host EIF2AK2; this interaction occurs in host stress granules and leads to EIF2AK2 inhibition. Interacts with host G3BP1; this interaction probably plays a role in Nsp1-beta-mediated inhibition of host EIF2AK2. In terms of assembly, interacts with host DDX18; this interaction redistributes host DDX18 to the cytoplasm. Interacts with host IFITM1. As to quaternary structure, interacts with host DDX5. In terms of assembly, interacts with host OTULIN. Interacts with host LGALS3. Specific enzymatic cleavages in vivo by its own proteases yield mature proteins. Nsp1 is autocleaved into two subunits, Nsp1-alpha and Nsp1-beta. There are two alternative pathways for processing. Either nsp4-5 is cleaved, which represents the major pathway or the nsp5-6 and nsp6-7 are processed, which represents the minor pathway. The major pathway occurs when nsp2 acts as a cofactor for nsp4.

The protein localises to the host nucleus. Its subcellular location is the host cytoplasm. The protein resides in the host membrane. It localises to the host endoplasmic reticulum. It is found in the host perinuclear region. The catalysed reaction is RNA(n) + a ribonucleoside 5'-triphosphate = RNA(n+1) + diphosphate. The enzyme catalyses ATP + H2O = ADP + phosphate + H(+). It carries out the reaction Thiol-dependent hydrolysis of ester, thioester, amide, peptide and isopeptide bonds formed by the C-terminal Gly of ubiquitin (a 76-residue protein attached to proteins as an intracellular targeting signal).. It catalyses the reaction uridylyl-uridylyl-ribonucleotide-RNA = a 3'-end uridylyl-2',3'-cyclophospho-uridine-RNA + a 5'-end dephospho-ribonucleoside-RNA. Contains the activities necessary for the transcription of negative stranded RNA, leader RNA, subgenomic mRNAs and progeny virion RNA as well as proteinases responsible for the cleavage of the polyprotein into functional products. Functionally, inhibits host IFN-beta production. Plays a role in the degradation of the host transcriptional activator CREBBP protein. The degradation of host CREBBP which is a key component of the IFN enhanceosome is likely responsible for the inhibition of interferon mediated by Nsp1-alpha. Also participates in the inhibition of host NF-kappa-B activation by counteracting LUBAC-dependent induction of NF-kappa-B. Reduces host NEMO ubiquitination by blocking the interaction between the two LUBAC complex components RNF31 and SHARPIN. In terms of biological role, plays a role in blocking host mRNA nuclear export to the cytoplasm and subversion of host protein synthesis. Additionally, inhibits the interferon-activated JAK/STAT signal transduction by mediating the ubiquitination and subsequent proteasomal degradation of host KPNA1. Repurposes the host antiviral stress granules into a proviral platform to counteract the EIF2AK2/PKR restriction, thereby regulating the host inflammatory response. Its function is as follows. Multifunctional protein that acts as a viral protease and as a viral antagonist of host immune response. Cleaves the nsp2/nsp3 site in the viral polyprotein. Displays deubiquitinating activity that cleaves both ubiquitinated and ISGylated products and therefore inhibits ubiquitin and ISG15-dependent host innate immunity. Also deubiquinates host NFKBIA, thereby interfering with NFKBIA degradation and impairing subsequent NF-kappa-B activation. Plays a role in the inhibition of the immune response by interacting with host IFITM1. This interaction leads to the proteasomal degradation of the IFN-induced antiviral protein IFITM1. Functionally, cleaves the majority of cleavage sites present in the C-terminus of the polyprotein. Triggers host apoptosis through caspase-3, -8, and -9 activations. Subverts host innate immune responses through its protease activity. Targets the NF-kappa-B essential modulator NEMO and mediates its cleavage. Blocks host interferon beta induction and downstream signaling by cleaving mitochondrial MAVS, dislodging it from the mitochondria. Impairs host defense by cleaving host mRNA-decapping enzyme DCP1A to attenuate its antiviral activity. In terms of biological role, plays a role in the initial induction of autophagosomes from host endoplasmic reticulum. Its function is as follows. Plays a role in the inhibition of host STAT3 signaling pathway by inducing the degradation of STAT3. Responsible for replication and transcription of the viral RNA genome. Functionally, displays RNA and DNA duplex-unwinding activities with 5' to 3' polarity. In terms of biological role, plays a role in viral transcription/replication and prevents the simultaneous activation of host cell dsRNA sensors, such as MDA5/IFIH1, OAS, PKR and NLRP3 inflammasome. Acts by degrading the 5'-polyuridines generated during replication of the poly(A) region of viral genomic and subgenomic RNAs. Catalyzes a two-step reaction in which a 2'3'-cyclic phosphate (2'3'-cP) is first generated by 2'-O transesterification, which is then hydrolyzed to a 3'-phosphate (3'-P). If not degraded, poly(U) RNA would hybridize with poly(A) RNA tails and activate host dsRNA sensors. Also plays a role in the inhibition of host type I interferon production by recruiting host OTULIN to promote removal of linear ubiquitination targeting host NEMO. This chain is Replicase polyprotein 1ab, found in Porcine reproductive and respiratory syndrome virus (PRRSV).